The sequence spans 489 residues: Homoserine O-acetyltransferase (489 aa).

Residues 63 to 435 (NALVICHALS…SPEGHDAFLL (373 aa)) form the AB hydrolase-1 domain. Ser162 is a catalytic residue. Residue Ser162 is the Nucleophile of the active site. Residues 247-272 (RFGRNVPDPSKRQNINGTERLPTPPN) form a disordered region. Active-site residues include Asp401 and His430.

The protein belongs to the AB hydrolase superfamily. MetX family.

The enzyme catalyses L-homoserine + acetyl-CoA = O-acetyl-L-homoserine + CoA. It participates in amino-acid biosynthesis; L-methionine biosynthesis via de novo pathway; O-acetyl-L-homoserine from L-homoserine: step 1/1. Its function is as follows. Commits homoserine to the methionine biosynthesis pathway by catalyzing its O-acetylation. This is Homoserine O-acetyltransferase (metE) from Emericella nidulans (strain FGSC A4 / ATCC 38163 / CBS 112.46 / NRRL 194 / M139) (Aspergillus nidulans).